Reading from the N-terminus, the 438-residue chain is UPF0597 protein YE0448 (438 aa).

The protein belongs to the UPF0597 family.

The sequence is that of UPF0597 protein YE0448 from Yersinia enterocolitica serotype O:8 / biotype 1B (strain NCTC 13174 / 8081).